We begin with the raw amino-acid sequence, 3010 residues long: Genome polyprotein (3010 aa).

N-acetylserine; by host is present on S2. Residues 2–23 (STNGKPQRKTKRNTNRRPQDVK) are interaction with STAT1. Residues 2 to 58 (STNGKPQRKTKRNTNRRPQDVKFPGGGQIVGGVYLLPRRGPRLGVRATRKTWERSQP) form an interaction with EIF2AK2/PKR region. An interaction with DDX3X region spans residues 2 to 59 (STNGKPQRKTKRNTNRRPQDVKFPGGGQIVGGVYLLPRRGPRLGVRATRKTWERSQPR). The segment at 2-75 (STNGKPQRKT…PKARQPEGRA (74 aa)) is disordered. Residues 2 to 168 (STNGKPQRKT…EDGVNYATGN (167 aa)) lie on the Cytoplasmic side of the membrane. Short sequence motifs (nuclear localization signal) lie at residues 5–13 (GKPQRKTKR), 38–43 (PRRGPR), 58–64 (PRGRRQP), and 66–71 (PKARQP). Residues 7–16 (PQRKTKRNTN) are compositionally biased toward basic residues. Position 99 is a phosphoserine; by host (S99). Residues 112 to 152 (PRRRSRNLGKVIDTLTCGFADLMGYIPLVGAPLGGVARALA) are important for endoplasmic reticulum and mitochondrial localization. Residue S116 is modified to Phosphoserine; by host PKA. The segment at 122–173 (VIDTLTCGFADLMGYIPLVGAPLGGVARALAHGVRVLEDGVNYATGNLPGCS) is interaction with APOA2. The interval 164-167 (YATG) is important for lipid droplets localization. A helical transmembrane segment spans residues 169-189 (LPGCSFSIFLLALLSCLTIPA). Positions 178-191 (LLALLSCLTIPASA) are cleaved as a propeptide — ER anchor for the core protein, removed in mature form by host signal peptidase. Residues 190-358 (SAYEVHNVSG…GGAHWGVLAG (169 aa)) lie on the Lumenal side of the membrane. Residues N196, N209, N234, and N250 are each glycosylated (N-linked (GlcNAc...) asparagine; by host). The interval 265–296 (LVGAAAFCSAMYVGDLCGSVFLVSQLFTFSPR) is important for fusion. A glycan (N-linked (GlcNAc...) asparagine; by host) is linked at N305. Residues 359–379 (LAYYSMVGNWAKVLIVMLLFA) form a helical membrane-spanning segment. Residues 380–725 (GVDGSTIVSG…WEYILLLFLL (346 aa)) lie on the Lumenal side of the membrane. An HVR1 region spans residues 385 to 411 (TIVSGGTVARTTHSLASLFTQGASQKI). 4 N-linked (GlcNAc...) (high mannose) asparagine; by host glycosylation sites follow: N417, N423, N430, and N448. Cystine bridges form between C429/C552, C452/C459, C486/C494, and C503/C508. Positions 474-479 (YTEADI) are HVR2. A CD81-binding 1 region spans residues 480-493 (QDQRPYCWHYAPRP). N532 is a glycosylation site (N-linked (GlcNAc...) (high mannose) asparagine; by host). An N-linked (GlcNAc...) asparagine; by host glycan is attached at N540. The interval 544–551 (PPQGNWFG) is CD81-binding 2. The N-linked (GlcNAc...) (high mannose) asparagine; by host glycan is linked to N556. Residues C564 and C569 are joined by a disulfide bond. A glycan (N-linked (GlcNAc...) (high mannose) asparagine; by host) is linked at N576. 3 cysteine pairs are disulfide-bonded: C581–C585, C597–C620, and C607–C644. N-linked (GlcNAc...) (high mannose) asparagine; by host glycans are attached at residues N623 and N645. Cysteines 652 and 677 form a disulfide. A PKR/eIF2-alpha phosphorylation homology domain (PePHD) region spans residues 660-671 (SELSPLLLSTTE). The helical transmembrane segment at 726 to 746 (LADARVCACLWMMLLIAQAEA) threads the bilayer. The Lumenal portion of the chain corresponds to 747–757 (ALENLVVFNAA). Residues 758 to 778 (SVAGMHGTLSFLVFFCAAWYI) form a helical membrane-spanning segment. Residues 779–781 (KGR) are Cytoplasmic-facing. A helical membrane pass occupies residues 782–803 (LVPGAAYALYGVWPLLLLLLAL). Residues 804–813 (PPRAYAMDRE) lie on the Lumenal side of the membrane. A helical transmembrane segment spans residues 814 to 834 (MAASCGGAVFVGLVLLTLSPH). The Cytoplasmic segment spans residues 835–838 (YKMF). Residues 839–859 (LARLIWWLQYFITRAEAHLQV) form a helical membrane-spanning segment. Over 860–881 (WIPPLNVRGGRDAIILLTCAAY) the chain is Lumenal. Residues 882–902 (PELIFDITKILLAILGPLMVL) form a helical membrane-spanning segment. The 124-residue stretch at 903–1026 (QAGLTRIPYF…SLEGRGWRLL (124 aa)) folds into the Peptidase C18 domain. Topologically, residues 903–1657 (QAGLTRIPYF…CMSADLEVVT (755 aa)) are cytoplasmic. Residues 904–1206 (AGLTRIPYFV…PVESMETTMR (303 aa)) form a protease NS2-3 region. C922 is lipidated: S-palmitoyl cysteine; by host. The interval 929 to 949 (AGGHYVQMALMKLAALTGTYV) is interaction with host SCPS1. Active-site for protease NS2 activity; shared with dimeric partner residues include H952, E972, and C993. Positions 1027–1208 (APITAYAQQT…ESMETTMRSP (182 aa)) constitute a Peptidase S29 domain. Active-site charge relay system; for serine protease NS3 activity residues include H1083 and D1107. Zn(2+) contacts are provided by C1123 and C1125. The active-site Charge relay system; for serine protease NS3 activity is S1165. Zn(2+) is bound by residues C1171 and H1175. In terms of domain architecture, Helicase ATP-binding spans 1217 to 1369 (PAVPQAFQVA…PNIEEIALSN (153 aa)). Residue 1230-1237 (APTGSGKS) coordinates ATP. 2 residues coordinate Mg(2+): S1237 and E1317. Positions 1316 to 1319 (DECH) match the DECH box motif. Residues 1486–1497 (QRRGRTSRGRRG) are RNA-binding. Residues 1658 to 1678 (STWVLVGGVLAALAAYCLTTG) form a helical membrane-spanning segment. The interval 1679–1690 (SVVIVGRIILSG) is NS3-binding. Residues 1679–1805 (SVVIVGRIIL…SITSPLTTQS (127 aa)) lie on the Cytoplasmic side of the membrane. The helical transmembrane segment at 1806 to 1824 (TLLFNILGGWVAAQLAPPG) threads the bilayer. Topologically, residues 1825 to 1828 (AASA) are lumenal. Residues 1829-1849 (FVGAGIAGAAVGSIGLGKVLV) form a helical membrane-spanning segment. D1850 is a topological domain (cytoplasmic). A helical membrane pass occupies residues 1851 to 1871 (MVAGYGAGVAGALVAFKVMSG). At 1872-1881 (EMPSTEDLVN) the chain is on the lumenal side. A helical transmembrane segment spans residues 1882–1902 (LLPAILSPGALVVGVVCAAIL). At 1903-1972 (RRHVDPGEGA…WINEDCSTPC (70 aa)) the chain is on the cytoplasmic side. S-palmitoyl cysteine; by host attachment occurs at residues C1968 and C1972. An intramembrane segment occupies 1973 to 2002 (SGSWLRDVWDWICTVLADFKTWLQSKLLPR). Residues 2003–2989 (LPGVPFFSCQ…YHSLSRARPR (987 aa)) are Cytoplasmic-facing. Zn(2+)-binding residues include C2011, C2029, C2031, and C2052. The interval 2120–2208 (EFFTEVDGVR…ASSSASQLSA (89 aa)) is FKBP8-binding. The interval 2120-2332 (EFFTEVDGVR…PIPPPRRKRT (213 aa)) is transcriptional activation. Positions 2135–2139 (PACKP) are interaction with non-structural protein 4A. Residues 2189-2441 (RLARGSPPSL…PCAAEESKLP (253 aa)) form an interaction with host SKP2 region. The residue at position 2194 (S2194) is a Phosphoserine; by host; in p56. Phosphoserine; by host; in p58 is present on residues S2197, S2201, S2204, S2207, and S2210. The ISDR stretch occupies residues 2210 to 2249 (SLKAACTTRHTPPDADLIEANLLWRQEMGGNITRVESENK). The interaction with EIF2AK2/PKR stretch occupies residues 2210–2275 (SLKAACTTRH…REVSVPAEIL (66 aa)). The interval 2249-2306 (KVVILDSFDPLRAEEDEREVSVPAEILRKSRKFPPALPVWARPDYNPPLLEPWKDPDY) is NS4B-binding. An SH3-binding motif is present at residues 2322 to 2325 (PPIP). The Nuclear localization signal signature appears at 2326–2334 (PPRRKRTVV). Residue K2350 forms a Glycyl lysine isopeptide (Lys-Gly) (interchain with G-Cter in ubiquitin) linkage. Residues 2351 to 2367 (TFGSSESSAAGSGTATA) show a composition bias toward low complexity. Positions 2351–2409 (TFGSSESSAAGSGTATAPPDQPSDDGDAGSDVESCSSMPPLEGEPGDPDLSDGSWSTVS) are disordered. The V3 stretch occupies residues 2354 to 2377 (SSESSAAGSGTATAPPDQPSDDGD). S2448 and S2461 each carry phosphoserine; by host. A RdRp catalytic domain is found at 2633–2751 (PMGFSYDTRC…ICESAGTQED (119 aa)). Residues D2639, D2737, and D2738 each contribute to the Mg(2+) site. A helical membrane pass occupies residues 2990–3010 (WFMLCLLLLSVGVGIYLLPNR).

This sequence belongs to the hepacivirus polyprotein family. Homooligomer. Interacts with E1 (via C-terminus). Interacts with the non-structural protein 5A. Interacts (via N-terminus) with host STAT1 (via SH2 domain); this interaction results in decreased STAT1 phosphorylation and ubiquitin-mediated proteasome-dependent STAT1 degradation, leading to decreased IFN-stimulated gene transcription. Interacts with host STAT3; this interaction constitutively activates STAT3. Interacts with host LTBR receptor. Interacts with host TNFRSF1A receptor and possibly induces apoptosis. Interacts with host HNRPK. Interacts with host YWHAE. Interacts with host UBE3A/E6AP. Interacts with host DDX3X. Interacts with host APOA2. Interacts with host RXRA protein. Interacts with host SP110 isoform 3/Sp110b; this interaction sequesters the transcriptional corepressor SP110 away from the nucleus. Interacts with host CREB3 nuclear transcription protein; this interaction triggers cell transformation. Interacts with host ACY3. Interacts with host C1QR1. Interacts with host RBM24; this interaction, which enhances the interaction of the mature core protein with 5'-UTR, may inhibit viral translation and favor replication. Interacts with host EIF2AK2/PKR; this interaction induces the autophosphorylation of EIF2AK2. Part of the viral assembly initiation complex composed of NS2, E1, E2, NS3, NS4A, NS5A and the mature core protein. In terms of assembly, forms a heterodimer with envelope glycoprotein E2. Interacts with mature core protein. Interacts with protease NS2. The heterodimer E1/E2 interacts with host CLDN1; this interaction plays a role in viral entry into host cell. Interacts with host SPSB2 (via C-terminus). Part of the viral assembly initiation complex composed of NS2, E1, E2, NS3, NS4A, NS5A and the mature core protein. Interacts with host NEURL3; this interaction prevents E1 binding to glycoprotein E2. As to quaternary structure, forms a heterodimer with envelope glycoprotein E1. Interacts with host CD81 and SCARB1 receptors; these interactions play a role in viral entry into host cell. Interacts with host EIF2AK2/PKR; this interaction inhibits EIF2AK2 and probably allows the virus to evade the innate immune response. Interacts with host CD209/DC-SIGN and CLEC4M/DC-SIGNR. Interact with host SPCS1; this interaction is essential for viral particle assembly. Interacts with protease NS2. The heterodimer E1/E2 interacts with host CLDN1; this interaction plays a role in viral entry into host cell. Part of the viral assembly initiation complex composed of NS2, E1, E2, NS3, NS4A, NS5A and the mature core protein. Interacts with host SLC3A2/4F2hc; the interaction may facilitate viral entry into host cell. Interacts with human PLSCR1. Homohexamer. Homoheptamer. Interacts with protease NS2. In terms of assembly, homodimer. Interacts with host SPCS1; this interaction is essential for viral particle assembly. Interacts with envelope glycoprotein E1. Interacts with envelope glycoprotein E2. Interacts with viroporin p7. Interacts with serine protease/helicase NS3. Part of the replication complex composed of NS2, NS3, NS4A, NS4B, NS5A and the RNA-directed RNA polymerase embedded in an ER-derived membranous web. Part of the viral assembly initiation complex composed of NS2, E1, E2, NS3, NS4A, NS5A and the mature core protein. As to quaternary structure, interacts with protease NS2. Interacts with non-structural protein 4A; this interaction stabilizes the folding of NS3 serine protease. NS3-NS4A interaction is essential for NS3 activation and allows membrane anchorage of the latter. NS3/NS4A complex also prevents phosphorylation of host IRF3, thus preventing the establishment of dsRNA induced antiviral state. Interacts with host MAVS; this interaction leads to the cleavage and inhibition of host MAVS. Interacts with host TICAM1; this interaction leads to the cleavage and inhibition of host TICAM1. Interacts with host TANK-binding kinase/TBK1; this interaction results in the inhibition of the association between TBK1 and IRF3, which leads to the inhibition of IRF3 activation. Interacts with host RBM24. Part of the replication complex composed of NS2, NS3, NS4A, NS4B, NS5A and the RNA-directed RNA polymerase embedded in an ER-derived membranous web. Part of the viral assembly initiation complex composed of NS2, E1, E2, NS3, NS4A, NS5A and the mature core protein. Interacts with NS3 serine protease; this interaction stabilizes the folding of NS3 serine protease. NS3-NS4A interaction is essential for NS3 activation and allows membrane anchorage of the latter. Interacts with non-structural protein 5A (via N-terminus). Part of the replication complex composed of NS2, NS3, NS4A, NS4B, NS5A and the RNA-directed RNA polymerase embedded in an ER-derived membranous web. Part of the viral assembly initiation complex composed of NS2, E1, E2, NS3, NS4A, NS5A and the mature core protein. In terms of assembly, homomultimer. Interacts with non-structural protein NS5A. Interacts with host PLA2G4C; this interaction likely initiates the recruitment of replication complexes to lipid droplets. Interacts with host STING; this interaction disrupts the interaction between STING and TBK1 thereby suppressing the interferon signaling. Part of the replication complex composed of NS2, NS3, NS4A, NS4B, NS5A and the RNA-directed RNA polymerase embedded in an ER-derived membranous web. As to quaternary structure, monomer. Homodimer; dimerization is required for RNA-binding. Interacts with the mature core protein. Interacts (via N-terminus) with non-structural protein 4A. Interacts with non-structural protein 4B. Interacts (via region D2) with RNA-directed RNA polymerase. Part of the viral assembly initiation complex composed of NS2, E1, E2, NS3, NS4A, NS5A and the mature core protein. Part of the replication complex composed of NS2, NS3, NS4A, NS4B, NS5A and the RNA-directed RNA polymerase embedded in an ER-derived membranous web. Interacts with host GRB2. Interacts with host BIN1. Interacts with host PIK3R1. Interacts with host SRCAP. Interacts with host FKBP8. Interacts (via C-terminus) with host VAPB (via MSP domain). Interacts with host EIF2AK2/PKR; this interaction leads to disruption of EIF2AK2 dimerization by NS5A and probably allows the virus to evade the innate immune response. Interacts (via N-terminus) with host PACSIN2 (via N-terminus); this interaction attenuates protein kinase C alpha-mediated phosphorylation of PACSIN2 by disrupting the interaction between PACSIN2 and PRKCA. Interacts (via N-terminus) with host SRC kinase (via SH2 domain). Interacts with most Src-family kinases. Interacts with host IFI27 and SKP2; promotes the ubiquitin-mediated proteasomal degradation of NS5A. Interacts with host GPS2. Interacts with host TNFRSF21; this interaction allows the modulation by the virus of JNK, p38 MAPK, STAT3, and Akt signaling pathways in a DR6-dependent manner. Interacts (via N-terminus) with host CIDEB (via N-terminus); this interaction seems to regulate the association of HCV particles with APOE. Interacts with host CHKA/Choline Kinase-alpha; CHKA bridges host PI4KA and NS5A and potentiates NS5A-stimulated PI4KA activity, which then facilitates the targeting of the ternary complex to the ER for viral replication. Interacts with host SPSB2 (via C-terminus); this interaction targets NS5A for ubiquitination and degradation. Interacts with host RAB18; this interaction may promote the association of NS5A and other replicase components with lipid droplets. Interacts (via region D2) with host PPIA/CYPA; the interaction stimulates RNA-binding ability of NS5A and is dependent on the peptidyl-prolyl cis-trans isomerase activity of PPIA/CYPA. Interacts with host TRIM14; this interaction induces the degradation of NS5A. Homooligomer. Interacts with non-structural protein 5A. Interacts with host VAPB. Interacts with host PRK2/PKN2. Interacts with host HNRNPA1 and SEPT6; these interactions facilitate viral replication. Part of the replication complex composed of NS2, NS3, NS4A, NS4B, NS5A and the RNA-directed RNA polymerase. Zn(2+) serves as cofactor. Requires Mg(2+) as cofactor. In terms of processing, specific enzymatic cleavages in vivo yield mature proteins. The structural proteins, core, E1, E2 and p7 are produced by proteolytic processing by host signal peptidases. The core protein precursor is synthesized as a 23 kDa, which is retained in the ER membrane through the hydrophobic signal peptide. Cleavage by the signal peptidase releases the 21 kDa mature core protein. The cleavage of the core protein precursor occurs between aminoacids 176 and 188 but the exact cleavage site is not known. Some degraded forms of the core protein appear as well during the course of infection. The other proteins (p7, NS2, NS3, NS4A, NS4B, NS5A and NS5B) are cleaved by the viral proteases. Autoprocessing between NS2 and NS3 is mediated by the NS2 cysteine protease catalytic domain and regulated by the NS3 N-terminal domain. Phosphorylated by host PKC and PKA. Post-translationally, ubiquitinated; mediated by UBE3A and leading to core protein subsequent proteasomal degradation. In terms of processing, highly N-glycosylated. Palmitoylation is required for NS2/3 autoprocessing and E2 recruitment to membranes. Post-translationally, palmitoylated. This modification may play a role in its polymerization or in protein-protein interactions. In terms of processing, phosphorylated on serines in a basal form termed p56. p58 is a hyperphosphorylated form of p56. p56 and p58 coexist in the cell in roughly equivalent amounts. Hyperphosphorylation is dependent on the presence of NS4A. Host CSNK1A1/CKI-alpha or RPS6KB1 kinases may be responsible for NS5A phosphorylation. Tyrosine phosphorylation is essential for the interaction with host SRC. Post-translationally, the N-terminus is phosphorylated by host PRK2/PKN2. In terms of processing, ubiquitinated. Ubiquitination, most probably at Lys-2350, mediated by host IFI27 and SKP2 leads to proteasomal degradation, restricting viral infection. Ubiquitination by host TRIM22 leads to interruption of viral replication.

Its subcellular location is the host endoplasmic reticulum membrane. The protein resides in the host mitochondrion membrane. It is found in the virion. It localises to the host cytoplasm. The protein localises to the host nucleus. Its subcellular location is the host lipid droplet. The protein resides in the virion membrane. It is found in the host mitochondrion. It localises to the host cell membrane. The protein localises to the host perinuclear region. It catalyses the reaction Hydrolysis of four peptide bonds in the viral precursor polyprotein, commonly with Asp or Glu in the P6 position, Cys or Thr in P1 and Ser or Ala in P1'.. It carries out the reaction a ribonucleoside 5'-triphosphate + H2O = a ribonucleoside 5'-diphosphate + phosphate + H(+). The enzyme catalyses ATP + H2O = ADP + phosphate + H(+). The catalysed reaction is RNA(n) + a ribonucleoside 5'-triphosphate = RNA(n+1) + diphosphate. With respect to regulation, inhibited by the antiviral drug hexamethylene amiloride. Inhibition by amantadine appears to be genotype-dependent. Also inhibited by long-alkyl-chain iminosugar derivatives. Its activity is regulated as follows. Activity is up-regulated by PRK2/PKN2-mediated phosphorylation. Functionally, packages viral RNA to form a viral nucleocapsid, and promotes virion budding. Participates in the viral particle production as a result of its interaction with the non-structural protein 5A. Binds RNA and may function as a RNA chaperone to induce the RNA structural rearrangements taking place during virus replication. Modulates viral translation initiation by interacting with viral IRES and 40S ribosomal subunit. Affects various cell signaling pathways, host immunity and lipid metabolism. Prevents the establishment of cellular antiviral state by blocking the interferon-alpha/beta (IFN-alpha/beta) and IFN-gamma signaling pathways and by blocking the formation of phosphorylated STAT1 and promoting ubiquitin-mediated proteasome-dependent degradation of STAT1. Activates STAT3 leading to cellular transformation. Regulates the activity of cellular genes, including c-myc and c-fos. May repress the promoter of p53, and sequester CREB3 and SP110 isoform 3/Sp110b in the cytoplasm. Represses cell cycle negative regulating factor CDKN1A, thereby interrupting an important check point of normal cell cycle regulation. Targets transcription factors involved in the regulation of inflammatory responses and in the immune response: suppresses TNF-induced NF-kappa-B activation, and activates AP-1. Binds to dendritic cells (DCs) via C1QR1, resulting in down-regulation of T-lymphocytes proliferation. Alters lipid metabolism by interacting with hepatocellular proteins involved in lipid accumulation and storage. Induces up-regulation of FAS promoter activity, and thereby contributes to the increased triglyceride accumulation in hepatocytes (steatosis). In terms of biological role, forms a heterodimer with envelope glycoprotein E2, which mediates virus attachment to the host cell, virion internalization through clathrin-dependent endocytosis and fusion with host membrane. Fusion with the host cell is most likely mediated by both E1 and E2, through conformational rearrangements of the heterodimer required for fusion rather than a classical class II fusion mechanism. E1/E2 heterodimer binds host apolipoproteins such as APOB and ApoE thereby forming a lipo-viro-particle (LVP). APOE associated to the LVP allows the initial virus attachment to cell surface receptors such as the heparan sulfate proteoglycans (HSPGs), syndecan-1 (SDC1), syndecan-1 (SDC2), the low-density lipoprotein receptor (LDLR) and scavenger receptor class B type I (SCARB1). The cholesterol transfer activity of SCARB1 allows E2 exposure and binding of E2 to SCARB1 and the tetraspanin CD81. E1/E2 heterodimer binding on CD81 activates the epithelial growth factor receptor (EGFR) signaling pathway. Diffusion of the complex E1-E2-EGFR-SCARB1-CD81 to the cell lateral membrane allows further interaction with Claudin 1 (CLDN1) and occludin (OCLN) to finally trigger HCV entry. Its function is as follows. Forms a heterodimer with envelope glycoprotein E1, which mediates virus attachment to the host cell, virion internalization through clathrin-dependent endocytosis and fusion with host membrane. Fusion with the host cell is most likely mediated by both E1 and E2, through conformational rearrangements of the heterodimer required for fusion rather than a classical class II fusion mechanism. The interaction between envelope glycoprotein E2 and host apolipoprotein E/APOE allows the proper assembly, maturation and infectivity of the viral particles. This interaction is probably promoted via the up-regulation of cellular autophagy by the virus. E1/E2 heterodimer binds host apolipoproteins such as APOB and APOE thereby forming a lipo-viro-particle (LVP). APOE associated to the LVP allows the initial virus attachment to cell surface receptors such as the heparan sulfate proteoglycans (HSPGs), syndecan-1 (SDC1), syndecan-1 (SDC2), the low-density lipoprotein receptor (LDLR) and scavenger receptor class B type I (SCARB1). The cholesterol transfer activity of SCARB1 allows E2 exposure and binding of E2 to SCARB1 and the tetraspanin CD81. E1/E2 heterodimer binding on CD81 activates the epithelial growth factor receptor (EGFR) signaling pathway. Diffusion of the complex E1-E2-EGFR-SCARB1-CD81 to the cell lateral membrane allows further interaction with Claudin 1 (CLDN1) and occludin (OCLN) to finally trigger HCV entry. Inhibits host EIF2AK2/PKR activation, preventing the establishment of an antiviral state. Viral ligand for CD209/DC-SIGN and CLEC4M/DC-SIGNR, which are respectively found on dendritic cells (DCs), and on liver sinusoidal endothelial cells and macrophage-like cells of lymph node sinuses. These interactions allow the capture of circulating HCV particles by these cells and subsequent facilitated transmission to permissive cells such as hepatocytes and lymphocyte subpopulations. The interaction between E2 and host amino acid transporter complex formed by SLC3A2 and SLC7A5/LAT1 may facilitate viral entry into host cell. Ion channel protein that acts as a viroporin and plays an essential role in the assembly, envelopment and secretion of viral particles. Regulates the host cell secretory pathway, which induces the intracellular retention of viral glycoproteins and favors assembly of viral particles. Creates a pore in acidic organelles and releases Ca(2+) and H(+) in the cytoplasm of infected cells, leading to a productive viral infection. High levels of cytoplasmic Ca(2+) may trigger membrane trafficking and transport of viral ER-associated proteins to viroplasms, sites of viral genome replication. This ionic imbalance induces the assembly of the inflammasome complex, which triggers the maturation of pro-IL-1beta into IL-1beta through the action of caspase-1. Targets also host mitochondria and induces mitochondrial depolarization. In addition of its role as a viroporin, acts as a lipid raft adhesion factor. Functionally, cysteine protease required for the proteolytic auto-cleavage between the non-structural proteins NS2 and NS3. The N-terminus of NS3 is required for the function of NS2 protease (active region NS2-3). Promotes the initiation of viral particle assembly by mediating the interaction between structural and non-structural proteins. In terms of biological role, displays three enzymatic activities: serine protease with a chymotrypsin-like fold, NTPase and RNA helicase. NS3 serine protease, in association with NS4A, is responsible for the cleavages of NS3-NS4A, NS4A-NS4B, NS4B-NS5A and NS5A-NS5B. The NS3/NS4A complex prevents phosphorylation of host IRF3, thus preventing the establishment of dsRNA induced antiviral state. The NS3/NS4A complex induces host amino acid transporter component SLC3A2, thus contributing to HCV propagation. NS3 RNA helicase binds to RNA and unwinds both dsDNA and dsRNA in the 3' to 5' direction, and likely resolves RNA complicated stable secondary structures in the template strand. Binds a single ATP and catalyzes the unzipping of a single base pair of dsRNA. Inhibits host antiviral proteins TBK1 and IRF3 thereby preventing the establishment of an antiviral state. Cleaves host MAVS/CARDIF thereby preventing the establishment of an antiviral state. Cleaves host TICAM1/TRIF, thereby disrupting TLR3 signaling and preventing the establishment of an antiviral state. Its function is as follows. Peptide cofactor which forms a non-covalent complex with the N-terminal of NS3 serine protease. The NS3/NS4A complex prevents phosphorylation of host IRF3, thus preventing the establishment of dsRNA induced antiviral state. The NS3/NS4A complex induces host amino acid transporter component SLC3A2, thus contributing to HCV propagation. Induces a specific membrane alteration that serves as a scaffold for the virus replication complex. This membrane alteration gives rise to the so-called ER-derived membranous web that contains the replication complex. NS4B self-interaction contributes to its function in membranous web formation. Promotes host TRIF protein degradation in a CASP8-dependent manner thereby inhibiting host TLR3-mediated interferon signaling. Disrupts the interaction between STING and TBK1 contributing to the inhibition of interferon signaling. Functionally, phosphorylated protein that is indispensable for viral replication and assembly. Both hypo- and hyperphosphorylated states are required for the viral life cycle. The hyperphosphorylated form of NS5A is an inhibitor of viral replication. Involved in RNA-binding and especially in binding to the viral genome. Zinc is essential for RNA-binding. Participates in the viral particle production as a result of its interaction with the mature viral core protein. Its interaction with host VAPB may target the viral replication complex to vesicles. Down-regulates viral IRES translation initiation. Mediates interferon resistance, presumably by interacting with and inhibiting host EIF2AK2/PKR. Prevents BIN1-induced apoptosis. Acts as a transcriptional activator of some host genes important for viral replication when localized in the nucleus. Via the interaction with host PACSIN2, modulates lipid droplet formation in order to promote virion assembly. Modulates TNFRSF21/DR6 signaling pathway for viral propagation. In terms of biological role, RNA-dependent RNA polymerase that performs primer-template recognition and RNA synthesis during viral replication. Initiates RNA transcription/replication at a flavin adenine dinucleotide (FAD), resulting in a 5'- FAD cap on viral RNAs. In this way, recognition of viral 5' RNA by host pattern recognition receptors can be bypassed, thereby evading activation of antiviral pathways. In Hepatitis C virus genotype 1b (isolate Taiwan) (HCV), this protein is Genome polyprotein.